The following is a 79-amino-acid chain: Antimicrobial peptide ToAP2 (79 aa).

An N-terminal signal peptide occupies residues 1 to 23 (MQFKKQLLVIFFAYFLVVNESEA). A propeptide spanning residues 50–79 (SLMKRELKNLYDPYQRSVEMERLLKELPLY) is cleaved from the precursor.

The protein belongs to the non-disulfide-bridged peptide (NDBP) superfamily. Medium-length antimicrobial peptide (group 3) family. As to expression, expressed by the venom gland.

The protein localises to the secreted. It localises to the target cell membrane. In terms of biological role, antimicrobial peptide. Shows antibacterial activity against all M.massiliense bacterial strains tested. Has antifungal activity against Candida spp. and two Cryptococcus neoformans strains with MICs values ranging from 6.25 to 200 uM. Also shows an inhibitory activity on C.albicans biofilms at high concentrations. Exhibits chemotactic activity for monocytes, neutrophils, and eosinophils. Shows low cytotoxic activity and has weak hemolytic activity on human erythrocytes. In vivo, treatment of infected mice with M.massiliense reduces the bacterial load in the liver, lung, and spleen. May act by disrupting the integrity of the bacterial cell membrane. The sequence is that of Antimicrobial peptide ToAP2 from Tityus obscurus (Amazonian scorpion).